The following is a 269-amino-acid chain: 4-hydroxy-tetrahydrodipicolinate reductase (269 aa).

NAD(+) is bound by residues 9 to 14 (GCAGKM), aspartate 35, 102 to 104 (GTT), and 128 to 131 (APNF). The active-site Proton donor/acceptor is histidine 158. Residue histidine 159 participates in (S)-2,3,4,5-tetrahydrodipicolinate binding. Lysine 162 functions as the Proton donor in the catalytic mechanism. 168-169 (GT) serves as a coordination point for (S)-2,3,4,5-tetrahydrodipicolinate.

This sequence belongs to the DapB family.

The protein resides in the cytoplasm. The enzyme catalyses (S)-2,3,4,5-tetrahydrodipicolinate + NAD(+) + H2O = (2S,4S)-4-hydroxy-2,3,4,5-tetrahydrodipicolinate + NADH + H(+). The catalysed reaction is (S)-2,3,4,5-tetrahydrodipicolinate + NADP(+) + H2O = (2S,4S)-4-hydroxy-2,3,4,5-tetrahydrodipicolinate + NADPH + H(+). It functions in the pathway amino-acid biosynthesis; L-lysine biosynthesis via DAP pathway; (S)-tetrahydrodipicolinate from L-aspartate: step 4/4. Functionally, catalyzes the conversion of 4-hydroxy-tetrahydrodipicolinate (HTPA) to tetrahydrodipicolinate. The sequence is that of 4-hydroxy-tetrahydrodipicolinate reductase from Gloeobacter violaceus (strain ATCC 29082 / PCC 7421).